An 812-amino-acid chain; its full sequence is Probable beta-glucosidase D (812 aa).

Positions 1-18 are cleaved as a signal peptide; sequence MRVPSLSVLSFLLGTALA. N-linked (GlcNAc...) asparagine glycosylation is found at asparagine 53 and asparagine 188. Residues 186 to 248 form a disordered region; sequence ETNRTGGMGG…GMGGGMAGSS (63 aa). The span at 191 to 207 shows a compositional bias: gly residues; that stretch reads GGMGGGGGAPGGGGMGR. A compositionally biased stretch (polar residues) spans 211-225; it reads FSSSVPGGMSPTSSA. The segment covering 236–245 has biased composition (gly residues); it reads GGSGMGGGMA. N-linked (GlcNAc...) asparagine glycosylation occurs at asparagine 296. Aspartate 324 is a catalytic residue. Asparagine 360, asparagine 384, asparagine 422, asparagine 501, asparagine 592, and asparagine 646 each carry an N-linked (GlcNAc...) asparagine glycan.

The protein belongs to the glycosyl hydrolase 3 family.

The protein resides in the secreted. The catalysed reaction is Hydrolysis of terminal, non-reducing beta-D-glucosyl residues with release of beta-D-glucose.. It functions in the pathway glycan metabolism; cellulose degradation. Its function is as follows. Beta-glucosidases are one of a number of cellulolytic enzymes involved in the degradation of cellulosic biomass. Catalyzes the last step releasing glucose from the inhibitory cellobiose. The sequence is that of Probable beta-glucosidase D (bglD) from Emericella nidulans (strain FGSC A4 / ATCC 38163 / CBS 112.46 / NRRL 194 / M139) (Aspergillus nidulans).